An 87-amino-acid polypeptide reads, in one-letter code: Protein anon-73B1 (87 aa).

A helical membrane pass occupies residues 25-47 (LLIRYGLYVGALFQFVCISAAVL). Residues 51–87 (NPDGQSNPESGEVTEREGEPVRTRLHKIRKLEKKKRR) form a disordered region. Basic and acidic residues predominate over residues 63–72 (VTEREGEPVR). Basic residues predominate over residues 73–87 (TRLHKIRKLEKKKRR).

Belongs to the UPF0239 family.

The protein localises to the membrane. The sequence is that of Protein anon-73B1 (anon-73B1) from Drosophila melanogaster (Fruit fly).